We begin with the raw amino-acid sequence, 428 residues long: Protein clpf-1 (428 aa).

2 residues coordinate ATP: Glu16 and Arg56. The disordered stretch occupies residues 99-118; that stretch reads KKREEQAVSNSSKPKGPRLL. Residue 124 to 129 coordinates ATP; the sequence is DVGKTT.

The protein belongs to the Clp1 family. Clp1 subfamily.

It is found in the nucleus. Functionally, required for endonucleolytic cleavage during polyadenylation-dependent pre-mRNA 3'-end formation. The polypeptide is Protein clpf-1 (Caenorhabditis briggsae).